Here is a 241-residue protein sequence, read N- to C-terminus: Large ribosomal subunit protein uL3 (241 aa).

Disordered regions lie at residues 140-168 (SHRS…HMGD) and 216-241 (APKP…EEGA). The residue at position 151 (Gln-151) is an N5-methylglutamine.

It belongs to the universal ribosomal protein uL3 family. In terms of assembly, part of the 50S ribosomal subunit. Forms a cluster with proteins L14 and L19. In terms of processing, methylated by PrmB.

One of the primary rRNA binding proteins, it binds directly near the 3'-end of the 23S rRNA, where it nucleates assembly of the 50S subunit. This chain is Large ribosomal subunit protein uL3, found in Xanthobacter autotrophicus (strain ATCC BAA-1158 / Py2).